A 300-amino-acid polypeptide reads, in one-letter code: HTH-type transcriptional regulator ArgP (300 aa).

Residues 4–60 (PDYRTLQALDAVIRERGFERAAQKLCITQSAVSQRIKQLENLFGQPLLVRTVPPRPT) form the HTH lysR-type domain. The H-T-H motif DNA-binding region spans 21-40 (FERAAQKLCITQSAVSQRIK).

Belongs to the LysR transcriptional regulatory family. As to quaternary structure, homodimer.

Functionally, controls the transcription of genes involved in arginine and lysine metabolism. The chain is HTH-type transcriptional regulator ArgP from Photorhabdus laumondii subsp. laumondii (strain DSM 15139 / CIP 105565 / TT01) (Photorhabdus luminescens subsp. laumondii).